We begin with the raw amino-acid sequence, 1257 residues long: Bifunctional autolysin (1257 aa).

The signal sequence occupies residues 1–29; sequence MAKKFNYKLPSMVALTLVGSAVTAHQVQA. A compositionally biased stretch (polar residues) spans 99–137; sequence QVNGDTRATQSTTSNNAKPVTKSTNTTAPKTNNNVTSAG. Disordered regions lie at residues 99–150, 173–217, and 417–441; these read QVNG…NSEN, AAPK…KYKP, and TQST…PSTG. 2 stretches are compositionally biased toward low complexity: residues 173–208 and 419–440; these read AAPK…AAAP and STTT…TPST. Residues 197–776 form an N-acetylmuramoyl-L-alanine amidase region; the sequence is ASAQPRSAAA…AVAQPKTAVK (580 aa). GW domains lie at 444-518, 520-594, 613-687, 689-763, 785-860, 862-937, and 944-1018; these read TVAA…YNTA, SPVN…DTAK, TVSS…YNNA, SPVN…VPAA, TTQT…VQNL, KEVK…APTA, and AAKD…KELI. The interval 777 to 1257 is endo-beta-N-acetylglucosaminidase; it reads AYAVTKPQTT…GKYFDIPQYK (481 aa).

The protein in the N-terminal section; belongs to the N-acetylmuramoyl-L-alanine amidase 2 family. In the C-terminal section; belongs to the glycosyl hydrolase 73 family. As to quaternary structure, oligomer; forms a ring structure at the cell surface which is important for efficient partitioning of daughter cells after cell division. Post-translationally, undergoes proteolytic processing to generate the two extracellular lytic enzymes, probably at the septal region on the cell surface.

Its subcellular location is the secreted. The catalysed reaction is Hydrolyzes the link between N-acetylmuramoyl residues and L-amino acid residues in certain cell-wall glycopeptides.. It carries out the reaction an N(4)-(oligosaccharide-(1-&gt;3)-[oligosaccharide-(1-&gt;6)]-beta-D-Man-(1-&gt;4)-beta-D-GlcNAc-(1-&gt;4)-alpha-D-GlcNAc)-L-asparaginyl-[protein] + H2O = an oligosaccharide-(1-&gt;3)-[oligosaccharide-(1-&gt;6)]-beta-D-Man-(1-&gt;4)-D-GlcNAc + N(4)-(N-acetyl-beta-D-glucosaminyl)-L-asparaginyl-[protein]. Endohydrolysis of the di-N-acetylchitobiosyl unit in high-mannose glycopeptides and glycoproteins containing the -[(Man)5(GlcNAc)2]-Asn structure. One N-acetyl-D-glucosamine residue remains attached to the protein; the rest of the oligosaccharide is released intact. Cleaves the peptidoglycan connecting the daughter cells at the end of the cell division cycle, resulting in the separation of the two newly divided cells. Acts as an autolysin in penicillin-induced lysis. The sequence is that of Bifunctional autolysin (atl) from Staphylococcus aureus (strain MRSA252).